The chain runs to 224 residues: uncharacterized protein (224 aa).

The S-adenosyl-L-methionine site is built by G177, I197, and L206.

The protein belongs to the class IV-like SAM-binding methyltransferase superfamily. RNA methyltransferase TrmH family.

This is an uncharacterized protein from Archaeoglobus fulgidus (strain ATCC 49558 / DSM 4304 / JCM 9628 / NBRC 100126 / VC-16).